The chain runs to 311 residues: tRNA dimethylallyltransferase (311 aa).

Residue 14 to 21 coordinates ATP; that stretch reads GPTAVGKT. 16–21 contacts substrate; that stretch reads TAVGKT. Residues 39–42 are interaction with substrate tRNA; it reads DSMQ.

Belongs to the IPP transferase family. Monomer. Mg(2+) serves as cofactor.

It carries out the reaction adenosine(37) in tRNA + dimethylallyl diphosphate = N(6)-dimethylallyladenosine(37) in tRNA + diphosphate. Catalyzes the transfer of a dimethylallyl group onto the adenine at position 37 in tRNAs that read codons beginning with uridine, leading to the formation of N6-(dimethylallyl)adenosine (i(6)A). The polypeptide is tRNA dimethylallyltransferase (Lactiplantibacillus plantarum (strain ATCC BAA-793 / NCIMB 8826 / WCFS1) (Lactobacillus plantarum)).